A 391-amino-acid polypeptide reads, in one-letter code: Septation protein etd1 (391 aa).

The disordered stretch occupies residues 49 to 68 (MKSYGSDITPRRPKQLGLPK).

Functionally, involved in septation. The sequence is that of Septation protein etd1 (etd1) from Schizosaccharomyces pombe (strain 972 / ATCC 24843) (Fission yeast).